Reading from the N-terminus, the 676-residue chain is Electrogenic aspartate/glutamate antiporter SLC25A13, mitochondrial (676 aa).

At Ala2 the chain carries N-acetylalanine. Positions 2–295 are regulatory N-terminal domain; sequence AAAKVALTKR…TLADIERIAP (294 aa). At 2–332 the chain is on the mitochondrial intermembrane side; that stretch reads AAAKVALTKR…LLQLAESAYR (331 aa). 4 consecutive EF-hand domains span residues 51–86, 87–122, 125–157, and 158–193; these read SQPN…SVLC, APDA…TTIH, IPFN…FLLE, and IQLE…IRPH. The Ca(2+) site is built by Asp66, Thr68, Asp70, Leu72, and Glu77. The segment at 296 to 312 is linker loop domain; it reads LEEGMLPFNLAEAQRQQ. The carrier domain stretch occupies residues 322–613; the sequence is FLLQLAESAY…LQRWFYVDFG (292 aa). Solcar repeat units lie at residues 327–419, 427–511, and 519–607; these read AESA…VRDK, VPLL…VKAS, and VSPG…LQRW. Residues 333 to 350 form a helical membrane-spanning segment; the sequence is FGLGSIAGAVGATAVYPI. Residues 351–393 are Mitochondrial matrix-facing; the sequence is DLVKTRMQNQRSTGSFVGELMYKNSFDCFKKVLRYEGFFGLYR. Lys354 and Lys373 each carry N6-acetyllysine. A helical transmembrane segment spans residues 394–413; sequence GLLPQLLGVAPEKAIKLTVN. Over 414–436 the chain is Mitochondrial intermembrane; it reads DFVRDKFMHKDGSVPLLAEIFAG. Residues 437 to 450 form a helical membrane-spanning segment; that stretch reads GCAGGSQVIFTNPL. Residues 451-485 are Mitochondrial matrix-facing; it reads EIVKIRLQVAGEITTGPRVSALSVVRDLGFFGIYK. N6-methyllysine is present on Lys454. Residue Lys485 is modified to N6-acetyllysine; alternate. At Lys485 the chain carries N6-succinyllysine; alternate. The helical transmembrane segment at 486–505 threads the bilayer; sequence GAKACFLRDIPFSAIYFPCY. Over 506-524 the chain is Mitochondrial intermembrane; sequence AHVKASFANEDGQVSPGSL. Residues 525–542 form a helical membrane-spanning segment; the sequence is LLAGAIAGMPAASLVTPA. Over 543–581 the chain is Mitochondrial matrix; it reads DVIKTRLQVAARAGQTTYSGVTDCFRKILREEGPKALWK. The residue at position 581 (Lys581) is an N6-succinyllysine. Residues 582–601 form a helical membrane-spanning segment; sequence GAGARVFRSSPQFGVTLLTY. The Mitochondrial intermembrane segment spans residues 602-676; it reads ELLQRWFYVD…STSKVTAVGS (75 aa). The C-terminal domain stretch occupies residues 614–676; the sequence is GVKPVGSELV…STSKVTAVGS (63 aa). At Lys663 the chain carries N6-acetyllysine. Ser667 is subject to Phosphoserine.

It belongs to the mitochondrial carrier (TC 2.A.29) family. In terms of assembly, homodimer (via N-terminus).

The protein localises to the mitochondrion inner membrane. It catalyses the reaction L-aspartate(in) + L-glutamate(out) + H(+)(out) = L-aspartate(out) + L-glutamate(in) + H(+)(in). The catalysed reaction is 3-sulfino-L-alanine(out) + L-glutamate(in) + H(+)(in) = 3-sulfino-L-alanine(in) + L-glutamate(out) + H(+)(out). The enzyme catalyses 3-sulfino-L-alanine(out) + L-aspartate(in) = 3-sulfino-L-alanine(in) + L-aspartate(out). Its activity is regulated as follows. L-aspartate and 3-sulfino-L-alanine uptake are both inhibited by glisoxepide. Mitochondrial electrogenic aspartate/glutamate antiporter that favors efflux of aspartate and entry of glutamate and proton within the mitochondria as part of the malate-aspartate shuttle. Also mediates the uptake of L-cysteinesulfinate (3-sulfino-L-alanine) by mitochondria in exchange of L-glutamate and proton. Can also exchange L-cysteinesulfinate with aspartate in their anionic form without any proton translocation. Lacks transport activity towards gamma-aminobutyric acid (GABA). This Rattus norvegicus (Rat) protein is Electrogenic aspartate/glutamate antiporter SLC25A13, mitochondrial.